The primary structure comprises 298 residues: tRNA-uridine aminocarboxypropyltransferase 2 (298 aa).

Residue methionine 1 is modified to N-acetylmethionine. Basic and acidic residues predominate over residues methionine 1–leucine 10. The disordered stretch occupies residues methionine 1–leucine 55. Over residues glycine 34–alanine 45 the composition is skewed to low complexity. Serine 132 is subject to Phosphoserine. The short motif at aspartate 178–tryptophan 181 is the DXTW element.

The protein belongs to the TDD superfamily. DTWD2 family.

It is found in the nucleus. The protein resides in the cytoplasm. It catalyses the reaction a uridine in tRNA + S-adenosyl-L-methionine = a 3-[(3S)-3-amino-3-carboxypropyl]uridine in tRNA + S-methyl-5'-thioadenosine + H(+). In terms of biological role, catalyzes the formation of 3-(3-amino-3-carboxypropyl)uridine (acp3U) at position 20a in the D-loop of several cytoplasmic tRNAs (acp3U(20a)). Also has a weak activity to form acp3U at position 20 in the D-loop of tRNAs (acp3U(20)). Involved in glycoRNA biosynthesis by mediating formation of acp3U, which acts as an attachment site for N-glycans on tRNAs. GlycoRNAs consist of RNAs modified with secretory N-glycans that are presented on the cell surface. The polypeptide is tRNA-uridine aminocarboxypropyltransferase 2 (Mus musculus (Mouse)).